The sequence spans 118 residues: MAYSKLRRNTSQRKSLLRSLVSDLIIKEKIITTESKAKELQKKVEKVITLAKKKSLHHRRQVFKKLFDENINKEQTVTQKLFTTTAEKYMKRNGGYTRIIKTVPRRGDAAPMAIITFV.

The protein belongs to the bacterial ribosomal protein bL17 family. In terms of assembly, part of the 50S ribosomal subunit. Contacts protein L32.

The protein is Large ribosomal subunit protein bL17 of Phytoplasma mali (strain AT).